A 75-amino-acid chain; its full sequence is MKQNIHPDYHFIKVQLTDGTVFETRSTWGKEGDTMKLDIDPRVHPAWTGGRSQLVDAGGQVARFNKRFGALLKKK.

Belongs to the bacterial ribosomal protein bL31 family. Type A subfamily. Part of the 50S ribosomal subunit.

Functionally, binds the 23S rRNA. The chain is Large ribosomal subunit protein bL31 from Zymomonas mobilis subsp. mobilis (strain ATCC 31821 / ZM4 / CP4).